Reading from the N-terminus, the 178-residue chain is Zinc finger protein ZAT11 (178 aa).

C2H2-type zinc fingers lie at residues 47 to 69 (FECK…RASH) and 94 to 116 (HKCS…MRRH).

Expressed in leaves.

The protein localises to the nucleus. Probable transcription factor that may be involved in stress responses. In Arabidopsis thaliana (Mouse-ear cress), this protein is Zinc finger protein ZAT11 (ZAT11).